The chain runs to 319 residues: MITIALFLVLLYFHDQLGYSAAQLQFGFYSETCPSAESIVRDVVQQAVTNDPGKAAVLLRLQFHDCFVEGCDGSILIKHGGNDDERFAAGNAGVAGFDVIDEAKSELERFCPGVVSCADIVALAARDAIAEAKGPFYEVPTGRRDGLIANVDHAKNLPDVQDSINTLKSKFREKGLSDQDLVLLSAGAHTIGTTACFFVIPRLDAQDPTINPEFFQILRSKCPQGGDVNVRIPLDWDSQFVFDNQIFQNIKNGRGVILSDSVLYQDNNMKKIIDSYLETNQSSKANFAADFTKAMIKMGAIGVKIGAEGEIRRLCSATN.

The N-terminal stretch at 1-22 is a signal peptide; sequence MITIALFLVLLYFHDQLGYSAA. 4 cysteine pairs are disulfide-bonded: C33–C111, C66–C71, C117–C315, and C196–C222. The Proton acceptor role is filled by H64. Ca(2+) is bound by residues D65, V68, G70, D72, and S74. A substrate-binding site is contributed by P158. H189 contributes to the heme b binding site. T190 contacts Ca(2+). The Ca(2+) site is built by D235, S238, and D243. An N-linked (GlcNAc...) asparagine glycan is attached at N280.

The protein belongs to the peroxidase family. Classical plant (class III) peroxidase subfamily. It depends on heme b as a cofactor. Ca(2+) is required as a cofactor.

The protein resides in the secreted. The enzyme catalyses 2 a phenolic donor + H2O2 = 2 a phenolic radical donor + 2 H2O. Its function is as follows. Removal of H(2)O(2), oxidation of toxic reductants, biosynthesis and degradation of lignin, suberization, auxin catabolism, response to environmental stresses such as wounding, pathogen attack and oxidative stress. These functions might be dependent on each isozyme/isoform in each plant tissue. In Arabidopsis thaliana (Mouse-ear cress), this protein is Peroxidase 13 (PER13).